Reading from the N-terminus, the 568-residue chain is MSSQKVFGITGPVSTVGATAAENKLNDSLIQELKKEGSFETEQETANRVQVLKILQELAQRFVYEVSKKKNMSDGMARDAGGKIFTYGSYRLGVHGPGSDIDTLVVVPKHVTREDFFTVFDSLLRERKELDEIAPVPDAFVPIIKIKFSGISIDLICARLDQPQVPLSLTLSDKNLLRNLDEKDLRALNGTRVTDEILELVPKPNVFRIALRAIKLWAQRRAVYANIFGFPGGVAWAMLVARICQLYPNACSAVILNRFFIILSEWNWPQPVILKPIEDGPLQVRVWNPKIYAQDRSHRMPVITPAYPSMCATHNITESTKKVILQEFVRGVQITNDIFSNKKSWANLFEKNDFFFRYKFYLEITAYTRGSDEQHLKWSGLVESKVRLLVMKLEVLAGIKIAHPFTKPFESSYCCPTEDDYEMIQDKYGSHKTETALNALKLVTDENKEEESIKDAPKAYLSTMYIGLDFNIENKKEKVDIHIPCTEFVNLCRSFNEDYGDHKVFNLALRFVKGYDLPDEVFDENEKRPSKKSKRKNLDARHETVKRSKSDAASGDNINGTTAAVDVN.

ATP contacts are provided by residues 87–89 (YGS), 99–102 (SDID), 100–102 (DID), Asp-154, Lys-215, Tyr-224, and 233–234 (GV). Mg(2+) is bound by residues Asp-100, Asp-102, and Asp-154. 2 positions are modified to phosphoserine: Ser-452 and Ser-550. Residues 525–568 (NEKRPSKKSKRKNLDARHETVKRSKSDAASGDNINGTTAAVDVN) form a disordered region. Residues 536–550 (KNLDARHETVKRSKS) are compositionally biased toward basic and acidic residues.

This sequence belongs to the poly(A) polymerase family. As to quaternary structure, component of the cleavage and polyadenylation factor (CPF) complex, which is composed of PTI1, SYC1, SSU72, GLC7, MPE1, REF2, PFS2, PTA1, YSH1/BRR5, SWD2, CFT2/YDH1, YTH1, CFT1/YHH1, FIP1 and PAP1. Interacts with FIR1 and RRP6. Mg(2+) is required as a cofactor. Mn(2+) serves as cofactor.

Its subcellular location is the nucleus. It carries out the reaction RNA(n) + ATP = RNA(n)-3'-adenine ribonucleotide + diphosphate. Polymerase component of the cleavage and polyadenylation factor (CPF) complex, which plays a key role in polyadenylation-dependent pre-mRNA 3'-end formation and cooperates with cleavage factors including the CFIA complex and NAB4/CFIB. The protein is Poly(A) polymerase (PAP1) of Saccharomyces cerevisiae (strain ATCC 204508 / S288c) (Baker's yeast).